We begin with the raw amino-acid sequence, 528 residues long: Light-independent protochlorophyllide reductase subunit B (528 aa).

D36 provides a ligand contact to [4Fe-4S] cluster. Residue D274 is the Proton donor of the active site. 409-410 (GL) lines the substrate pocket. The tract at residues 429–471 (GPSHHGGHAPKPMHDAPAASAAAGAEASMAEETAAPSQDAPAA) is disordered. Over residues 444-465 (APAASAAAGAEASMAEETAAPS) the composition is skewed to low complexity.

It belongs to the ChlB/BchB/BchZ family. Protochlorophyllide reductase is composed of three subunits; BchL, BchN and BchB. Forms a heterotetramer of two BchB and two BchN subunits. The cofactor is [4Fe-4S] cluster.

The catalysed reaction is chlorophyllide a + oxidized 2[4Fe-4S]-[ferredoxin] + 2 ADP + 2 phosphate = protochlorophyllide a + reduced 2[4Fe-4S]-[ferredoxin] + 2 ATP + 2 H2O. Its pathway is porphyrin-containing compound metabolism; bacteriochlorophyll biosynthesis (light-independent). In terms of biological role, component of the dark-operative protochlorophyllide reductase (DPOR) that uses Mg-ATP and reduced ferredoxin to reduce ring D of protochlorophyllide (Pchlide) to form chlorophyllide a (Chlide). This reaction is light-independent. The NB-protein (BchN-BchB) is the catalytic component of the complex. The sequence is that of Light-independent protochlorophyllide reductase subunit B from Dinoroseobacter shibae (strain DSM 16493 / NCIMB 14021 / DFL 12).